Consider the following 92-residue polypeptide: Acylphosphatase (92 aa).

Positions 5–92 (RAHVFISGRV…GKEGIFTIVW (88 aa)) constitute an Acylphosphatase-like domain. Residues Arg-20 and Asn-38 contribute to the active site.

This sequence belongs to the acylphosphatase family.

The catalysed reaction is an acyl phosphate + H2O = a carboxylate + phosphate + H(+). The sequence is that of Acylphosphatase (acyP) from Chloroflexus aurantiacus (strain ATCC 29366 / DSM 635 / J-10-fl).